Here is a 510-residue protein sequence, read N- to C-terminus: 2,3-bisphosphoglycerate-independent phosphoglycerate mutase (510 aa).

Residue aspartate 12 participates in Mn(2+) binding. Phosphotyrosine is present on tyrosine 36. Serine 62 serves as a coordination point for Mn(2+). Serine 62 functions as the Phosphoserine intermediate in the catalytic mechanism. Substrate is bound by residues histidine 123, 153 to 154 (RD), arginine 185, arginine 191, 261 to 264 (RPDR), and lysine 336. 5 residues coordinate Mn(2+): aspartate 403, histidine 407, aspartate 444, histidine 445, and histidine 462.

The protein belongs to the BPG-independent phosphoglycerate mutase family. In terms of assembly, monomer. Mn(2+) is required as a cofactor.

The enzyme catalyses (2R)-2-phosphoglycerate = (2R)-3-phosphoglycerate. The protein operates within carbohydrate degradation; glycolysis; pyruvate from D-glyceraldehyde 3-phosphate: step 3/5. Essential for rapid growth and for sporulation. Catalyzes the interconversion of 2-phosphoglycerate and 3-phosphoglycerate. The chain is 2,3-bisphosphoglycerate-independent phosphoglycerate mutase from Halalkalibacterium halodurans (strain ATCC BAA-125 / DSM 18197 / FERM 7344 / JCM 9153 / C-125) (Bacillus halodurans).